The primary structure comprises 209 residues: Large ribosomal subunit protein uL3 (209 aa).

Positions 121–154 (GGIKRHNFHRGPMAHGSKYHRRPGSSAAKGPART) are disordered.

This sequence belongs to the universal ribosomal protein uL3 family. In terms of assembly, part of the 50S ribosomal subunit. Forms a cluster with proteins L14 and L19.

Its function is as follows. One of the primary rRNA binding proteins, it binds directly near the 3'-end of the 23S rRNA, where it nucleates assembly of the 50S subunit. The sequence is that of Large ribosomal subunit protein uL3 from Desulforamulus reducens (strain ATCC BAA-1160 / DSM 100696 / MI-1) (Desulfotomaculum reducens).